Here is a 144-residue protein sequence, read N- to C-terminus: Large ribosomal subunit protein uL15 (144 aa).

The interval 1–53 (MRLNTLSPAEGAKHSAKRLGRGIGSGLGKTGGRGHKGQKSRTGGGVRRGFEGG) is disordered. Gly residues predominate over residues 21-31 (RGIGSGLGKTG).

It belongs to the universal ribosomal protein uL15 family. As to quaternary structure, part of the 50S ribosomal subunit.

Functionally, binds to the 23S rRNA. This chain is Large ribosomal subunit protein uL15, found in Pasteurella multocida (strain Pm70).